The following is a 607-amino-acid chain: Polyadenylate-binding protein 1-like (607 aa).

RRM domains lie at 11 to 89 (SSLY…WSHR), 99 to 175 (GNIF…HFKS), 191 to 268 (TNIY…RAQK), and 294 to 370 (VNLY…LAQR). The PABC domain maps to 523 to 600 (HQPLTVSMLA…AVAVLQVHRE (78 aa)).

It belongs to the polyadenylate-binding protein type-1 family. As to expression, expressed in ovary and testis.

It is found in the cytoplasm. Functionally, poly(A)-binding protein involved in oocyte maturation and early embryo development. It is required for cytosolic mRNA polyadenylation and translational activation of maternally stored mRNA in oocytes. The polypeptide is Polyadenylate-binding protein 1-like (Mus musculus (Mouse)).